Here is a 97-residue protein sequence, read N- to C-terminus: MKTALFLVFALAFIAVEGKFSKACSKPGQTVLAPDGCNHCRCSKNGIIMGCTKKMCPPRTMKQSCKPGATFKHKDGCNTCKCSDDGKSARCTARLCW.

The first 18 residues, 1–18, serve as a signal peptide directing secretion; that stretch reads MKTALFLVFALAFIAVEG. Pacifastin domains follow at residues 22 to 59 and 62 to 97; these read KACS…CPPR and KQSC…RLCW. 3 disulfides stabilise this stretch: Cys24-Cys42, Cys37-Cys56, and Cys40-Cys51. Residues 57 to 59 form a pro-Pro-Arg motif necessary for proteolytic processing region; the sequence is PPR. 3 disulfide bridges follow: Cys65–Cys82, Cys77–Cys96, and Cys80–Cys91.

Belongs to the protease inhibitor I19 family. Expressed by the venom gland.

Its subcellular location is the secreted. In terms of biological role, inhibits trypsin activity and prophenoloxidase (PPO) activation, an enzyme essential for both clotting and insect innate immune responses. It does not inhibit activity of chymotrypsin and protease K, and has no effect on phenoloxidase (PO) activity. In Platymeris rhadamanthus (Red spot assassin bug), this protein is U-reduvitoxin-Pr10a.